The following is a 440-amino-acid chain: Protein CyaD (440 aa).

Over 1 to 55 (MRRALRELAARHGRVLAASWRQRHRRPAGWFDPVETEFLPSALSLQERPISPTAR) the chain is Cytoplasmic. The helical transmembrane segment at 56-75 (WLARILMALAAGALVWSVVG) threads the bilayer. The Periplasmic portion of the chain corresponds to 76 to 440 (KTEIVVHAAG…RHAGESLGER (365 aa)).

The protein belongs to the membrane fusion protein (MFP) (TC 8.A.1) family.

The protein localises to the cell inner membrane. Its function is as follows. CyaD is necessary for transport of calmodulin-sensitive adenylate cyclase-hemolysin (cyclolysin). The sequence is that of Protein CyaD (cyaD) from Bordetella pertussis (strain ATCC 9797 / DSM 5571 / CCUG 30873 / LMG 14455 / NCTC 10739 / 18323).